The sequence spans 569 residues: Interleukin-1 receptor type 1 (569 aa).

The first 17 residues, 1–17, serve as a signal peptide directing secretion; sequence MKVLLRLICFIALLISS. The Extracellular segment spans residues 18–336; it reads LEADKCKERE…LIYPVTNFQK (319 aa). Disulfide bonds link Cys-23/Cys-104, Cys-44/Cys-96, Cys-121/Cys-164, and Cys-142/Cys-196. Ig-like C2-type domains follow at residues 23-110, 118-210, and 226-328; these read CKER…IKIS, PNLC…YPIT, and PVIV…IQLI. Asn-100 carries an N-linked (GlcNAc...) asparagine glycan. N-linked (GlcNAc...) asparagine glycosylation is found at Asn-193, Asn-233, Asn-249, Asn-263, and Asn-297. An intrachain disulfide couples Cys-248 to Cys-312. The chain crosses the membrane as a helical span at residues 337–356; the sequence is HMIGICVTLTVIIVCSVFIY. Over 357–569 the chain is Cytoplasmic; sequence KIFKIDIVLW…LQREAHVPLG (213 aa). Positions 383–538 constitute a TIR domain; sequence KTYDAYILYP…RFWKNVRYHM (156 aa). Residue Glu-470 is part of the active site. Tyr-496 carries the phosphotyrosine modification. The interval 540 to 569 is disordered; sequence VQRRSPSSKHQLLSPATKEKLQREAHVPLG. The segment covering 556–569 has biased composition (basic and acidic residues); sequence TKEKLQREAHVPLG.

Belongs to the interleukin-1 receptor family. The interleukin-1 receptor complex is a heterodimer of IL1R1 and IL1RAP. Interacts with PIK3R1. Interacts with IL1A. A soluble form (sIL1R1) is probably produced by proteolytic cleavage at the cell surface (shedding). Post-translationally, rapidly phosphorylated on Tyr-496 in response to IL-1, which creates a SH2 binding site for the PI 3-kinase regulatory subunit PIK3R1. In terms of tissue distribution, expressed in T-helper cell subsets. Preferentially expressed in T-helper 1 (Th1) cells.

It is found in the membrane. The protein localises to the cell membrane. Its subcellular location is the secreted. It catalyses the reaction NAD(+) + H2O = ADP-D-ribose + nicotinamide + H(+). Receptor for IL1A, IL1B and IL1RN. After binding to interleukin-1 associates with the coreceptor IL1RAP to form the high affinity interleukin-1 receptor complex which mediates interleukin-1-dependent activation of NF-kappa-B, MAPK and other pathways. Signaling involves the recruitment of adapter molecules such as TOLLIP, MYD88, and IRAK1 or IRAK2 via the respective TIR domains of the receptor/coreceptor subunits. Binds ligands with comparable affinity and binding of antagonist IL1RN prevents association with IL1RAP to form a signaling complex. Involved in IL1B-mediated costimulation of IFNG production from T-helper 1 (Th1) cells. This chain is Interleukin-1 receptor type 1 (IL1R1), found in Homo sapiens (Human).